A 199-amino-acid chain; its full sequence is Probable GTP-binding protein EngB (199 aa).

The EngB-type G domain maps to 28 to 199 (DLPEIALAGR…ESWDTILEYL (172 aa)). GTP-binding positions include 36–43 (GRSNVGKS), 63–67 (GKTQL), 81–84 (DVPG), 148–151 (TKAD), and 180–182 (FSS). Positions 43 and 65 each coordinate Mg(2+).

The protein belongs to the TRAFAC class TrmE-Era-EngA-EngB-Septin-like GTPase superfamily. EngB GTPase family. The cofactor is Mg(2+).

Its function is as follows. Necessary for normal cell division and for the maintenance of normal septation. The polypeptide is Probable GTP-binding protein EngB (Streptococcus equi subsp. zooepidemicus (strain H70)).